We begin with the raw amino-acid sequence, 678 residues long: DNA ligase (678 aa).

NAD(+) is bound by residues 36-40, 85-86, and Glu-117; these read DAEYD and SL. Catalysis depends on Lys-119, which acts as the N6-AMP-lysine intermediate. NAD(+)-binding residues include Arg-140, Glu-177, Lys-294, and Lys-318. The Zn(2+) site is built by Cys-412, Cys-415, Cys-430, and Cys-436. A BRCT domain is found at 595–678; sequence ADEQPLNGQT…NLLREHGIEV (84 aa).

The protein belongs to the NAD-dependent DNA ligase family. LigA subfamily. It depends on Mg(2+) as a cofactor. The cofactor is Mn(2+).

It carries out the reaction NAD(+) + (deoxyribonucleotide)n-3'-hydroxyl + 5'-phospho-(deoxyribonucleotide)m = (deoxyribonucleotide)n+m + AMP + beta-nicotinamide D-nucleotide.. DNA ligase that catalyzes the formation of phosphodiester linkages between 5'-phosphoryl and 3'-hydroxyl groups in double-stranded DNA using NAD as a coenzyme and as the energy source for the reaction. It is essential for DNA replication and repair of damaged DNA. In Marinobacter nauticus (strain ATCC 700491 / DSM 11845 / VT8) (Marinobacter aquaeolei), this protein is DNA ligase.